The chain runs to 137 residues: 6,7-dimethyl-8-ribityllumazine synthase (137 aa).

5-amino-6-(D-ribitylamino)uracil contacts are provided by residues phenylalanine 11, 43 to 45, and 67 to 69; these read SFD and CVI. A (2S)-2-hydroxy-3-oxobutyl phosphate-binding site is contributed by 72-73; sequence DT. Histidine 75 functions as the Proton donor in the catalytic mechanism. Position 100 (leucine 100) interacts with 5-amino-6-(D-ribitylamino)uracil. Position 115 (arginine 115) interacts with (2S)-2-hydroxy-3-oxobutyl phosphate.

It belongs to the DMRL synthase family. As to quaternary structure, forms an icosahedral capsid composed of 60 subunits, arranged as a dodecamer of pentamers.

The catalysed reaction is (2S)-2-hydroxy-3-oxobutyl phosphate + 5-amino-6-(D-ribitylamino)uracil = 6,7-dimethyl-8-(1-D-ribityl)lumazine + phosphate + 2 H2O + H(+). The protein operates within cofactor biosynthesis; riboflavin biosynthesis; riboflavin from 2-hydroxy-3-oxobutyl phosphate and 5-amino-6-(D-ribitylamino)uracil: step 1/2. In terms of biological role, catalyzes the formation of 6,7-dimethyl-8-ribityllumazine by condensation of 5-amino-6-(D-ribitylamino)uracil with 3,4-dihydroxy-2-butanone 4-phosphate. This is the penultimate step in the biosynthesis of riboflavin. This Methanococcus maripaludis (strain C6 / ATCC BAA-1332) protein is 6,7-dimethyl-8-ribityllumazine synthase.